Consider the following 220-residue polypeptide: Putative GED domain-containing protein DNM1P46 (220 aa).

Positions 18 to 46 (VSVETRNVKPQGKDSKAEENGSHSFMHSM) are disordered. A compositionally biased stretch (basic and acidic residues) spans 28–38 (QGKDSKAEENG). The GED domain maps to 54–149 (METTQNLVDS…CCPTCTRLGT (96 aa)). Positions 173-194 (DTPGGVGRAGTAARRDSRGNEK) are disordered. Residues 185–194 (ARRDSRGNEK) show a composition bias toward basic and acidic residues.

In Homo sapiens (Human), this protein is Putative GED domain-containing protein DNM1P46 (DNM1P46).